The sequence spans 434 residues: Adenylosuccinate synthetase (434 aa).

Residues 12–18 and 40–42 contribute to the GTP site; these read GDEGKGK and GHT. The active-site Proton acceptor is Asp-13. Mg(2+) is bound by residues Asp-13 and Gly-40. IMP is bound by residues 13–16, 38–41, Thr-129, Arg-143, Gln-224, Thr-239, and Arg-303; these read DEGK and NAGH. Residue His-41 is the Proton donor of the active site. 299-305 lines the substrate pocket; it reads AVTGRPR. Residues Arg-305, 331–333, and 413–415 each bind GTP; these read KLD and STG.

Belongs to the adenylosuccinate synthetase family. In terms of assembly, homodimer. Mg(2+) serves as cofactor.

The protein localises to the cytoplasm. The enzyme catalyses IMP + L-aspartate + GTP = N(6)-(1,2-dicarboxyethyl)-AMP + GDP + phosphate + 2 H(+). It participates in purine metabolism; AMP biosynthesis via de novo pathway; AMP from IMP: step 1/2. Its function is as follows. Plays an important role in the de novo pathway of purine nucleotide biosynthesis. Catalyzes the first committed step in the biosynthesis of AMP from IMP. This chain is Adenylosuccinate synthetase, found in Solibacter usitatus (strain Ellin6076).